A 273-amino-acid polypeptide reads, in one-letter code: ATP synthase F(1) complex subunit gamma, mitochondrial (273 aa).

N6-acetyllysine is present on Lys14. Lys24 carries the N6-succinyllysine modification. Lys30 carries the post-translational modification N6-acetyllysine. An N6-acetyllysine; alternate modification is found at Lys90. The residue at position 90 (Lys90) is an N6-succinyllysine; alternate. Lys113 is modified (N6-acetyllysine). Ser121 carries the phosphoserine modification. An N6-acetyllysine; alternate modification is found at Lys129. The residue at position 129 (Lys129) is an N6-succinyllysine; alternate. At Lys172 the chain carries N6-acetyllysine. Position 245 is an N6-succinyllysine (Lys245).

This sequence belongs to the ATPase gamma chain family. As to quaternary structure, component of the ATP synthase complex composed at least of ATP5F1A/subunit alpha, ATP5F1B/subunit beta, ATP5MC1/subunit c (homooctomer), MT-ATP6/subunit a, MT-ATP8/subunit 8, ATP5ME/subunit e, ATP5MF/subunit f, ATP5MG/subunit g, ATP5MK/subunit k, ATP5MJ/subunit j, ATP5F1C/subunit gamma, ATP5F1D/subunit delta, ATP5F1E/subunit epsilon, ATP5PF/subunit F6, ATP5PB/subunit b, ATP5PD/subunit d, ATP5PO/subunit OSCP. ATP synthase complex consists of a soluble F(1) head domain (subunits alpha(3) and beta(3)) - the catalytic core - and a membrane F(0) domain - the membrane proton channel (subunits c, a, 8, e, f, g, k and j). These two domains are linked by a central stalk (subunits gamma, delta, and epsilon) rotating inside the F1 region and a stationary peripheral stalk (subunits F6, b, d, and OSCP). Interacts with FLVCR2; this interaction occurs in the absence of heme and is disrupted upon heme binding.

It is found in the mitochondrion inner membrane. Its function is as follows. Subunit gamma, of the mitochondrial membrane ATP synthase complex (F(1)F(0) ATP synthase or Complex V) that produces ATP from ADP in the presence of a proton gradient across the membrane which is generated by electron transport complexes of the respiratory chain. ATP synthase complex consist of a soluble F(1) head domain - the catalytic core - and a membrane F(1) domain - the membrane proton channel. These two domains are linked by a central stalk rotating inside the F(1) region and a stationary peripheral stalk. During catalysis, ATP synthesis in the catalytic domain of F(1) is coupled via a rotary mechanism of the central stalk subunits to proton translocation. In vivo, can only synthesize ATP although its ATP hydrolase activity can be activated artificially in vitro. With the central stalk subunit delta, is essential for the biogenesis of F(1) catalytic part of the ATP synthase complex namely in the formation of F1 assembly intermediate. The sequence is that of ATP synthase F(1) complex subunit gamma, mitochondrial from Rattus norvegicus (Rat).